The sequence spans 109 residues: Iron-sulfur cluster assembly protein CyaY (109 aa).

This sequence belongs to the frataxin family.

Its function is as follows. Involved in iron-sulfur (Fe-S) cluster assembly. May act as a regulator of Fe-S biogenesis. This is Iron-sulfur cluster assembly protein CyaY from Bordetella avium (strain 197N).